A 58-amino-acid polypeptide reads, in one-letter code: MSQVTVGENEGIESALRRFKRSVAKAGIFSDLRRIRHHETPVEKYKRKLKQRSRNRRR.

It belongs to the bacterial ribosomal protein bS21 family.

In Synechococcus sp. (strain CC9605), this protein is Small ribosomal subunit protein bS21.